A 489-amino-acid chain; its full sequence is Membrane-bound acylglycerophosphatidylinositol O-acyltransferase frj (489 aa).

3 helical membrane-spanning segments follow: residues 2-22, 40-60, and 75-95; these read SIDD…GSYV, VLVV…SLAL, and LVTF…DFYF. Active-site residues include asparagine 331 and histidine 364. The next 2 helical transmembrane spans lie at 405 to 425 and 433 to 453; these read VIFW…FLLS and FYSS…ALGF.

It belongs to the membrane-bound acyltransferase family.

It localises to the membrane. It carries out the reaction a 1-acyl-sn-glycero-3-phospho-(1D-myo-inositol) + (5Z,8Z,11Z,14Z)-eicosatetraenoyl-CoA = a 1-acyl-2-(5Z,8Z,11Z,14Z-eicosatetraenoyl)-sn-glycero-3-phospho-(1D-myo-inositol) + CoA. It catalyses the reaction a 1-acyl-sn-glycero-3-phosphocholine + an acyl-CoA = a 1,2-diacyl-sn-glycero-3-phosphocholine + CoA. The enzyme catalyses (9Z)-hexadecenoyl-CoA + 1-hexadecanoyl-sn-glycero-3-phosphocholine = 1-hexadecanoyl-2-(9Z-hexadecenoyl)-sn-glycero-3-phosphocholine + CoA. The catalysed reaction is a 1-acyl-sn-glycero-3-phospho-L-serine + an acyl-CoA = a 1,2-diacyl-sn-glycero-3-phospho-L-serine + CoA. It carries out the reaction 1-(9Z-octadecenoyl)-sn-glycero-3-phospho-L-serine + (9Z)-hexadecenoyl-CoA = 1-(9Z-octadecenoyl)-2-(9Z-hexadecenoyl)-sn-glycero-3-phospho-L-serine + CoA. It catalyses the reaction a 1-acyl-sn-glycero-3-phosphoethanolamine + an acyl-CoA = a 1,2-diacyl-sn-glycero-3-phosphoethanolamine + CoA. The enzyme catalyses 1-hexadecanoyl-sn-glycero-3-phosphoethanolamine + (9Z)-hexadecenoyl-CoA = 1-hexadecanoyl-2-(9Z)-hexadecenoyl-sn-glycero-3-phosphoethanolamine + CoA. It participates in lipid metabolism; phospholipid metabolism. Its function is as follows. Acyltransferase that mediates the acylation of lysophospholipids to produce phospholipids (glycerophospholipids). Highest activity with lysophosphatidylinositol (1-acyl-sn-glycero-3-phospho-(1D-myo-inositol) or LPI) producing phosphatidylinositol (1,2-diacyl-sn-glycero-3-phospho-(1D-myo-inositol) or PI) (LPIAT activity), but also converts lysophosphatidylcholine (1-acyl-sn-glycero-3-phosphocholine or LPC) to phosphatidylcholine (1,2-diacyl-sn-glycero-3-phosphocholine or PC) (LPCAT activity), lysophosphatidylserine (1-acyl-2-hydroxy-sn-glycero-3-phospho-L-serine or LPS) to phosphatidylserine (1,2-diacyl-sn-glycero-3-phospho-L-serine or PS) (LPSAT activity), and lysophosphatidylethanolamine (1-acyl-sn-glycero-3-phosphoethanolamine or LPE) producing phosphatidylethanolamine (1,2-diacyl-sn-glycero-3-phosphoethanolamine or PE) (LPEAT activity). Has a preference for unsaturated fatty acid arachidonoyl-CoA ((5Z,8Z,11Z,14Z)-eicosatetraenoyl-CoA). Glycerophospholipids are important structural and functional components of cellular membrane, acyl-chain remodeling regulates the molecular species distribution of glycerophospholipids which can affect membrane fluidity and curvature. In Drosophila melanogaster (Fruit fly), this protein is Membrane-bound acylglycerophosphatidylinositol O-acyltransferase frj.